Reading from the N-terminus, the 76-residue chain is Large ribosomal subunit protein eL38 (76 aa).

Belongs to the eukaryotic ribosomal protein eL38 family.

The sequence is that of Large ribosomal subunit protein eL38 (RpL38) from Lysiphlebus testaceipes (Greenbugs aphid parastoid).